We begin with the raw amino-acid sequence, 588 residues long: Transcriptional regulatory protein ASH1 (588 aa).

Ser-56 bears the Phosphoserine mark. Disordered stretches follow at residues 85 to 109 (SNTA…GNSP), 377 to 398 (SNNS…QASN), and 417 to 495 (SSVS…TRHT). Over residues 99-109 (PISSLTPGNSP) the composition is skewed to polar residues. Over residues 383–392 (NVRKPSKNKI) the composition is skewed to basic residues. Positions 417 to 433 (SSVSASSSPSPSTPTKS) are enriched in low complexity. Position 465 is a phosphoserine (Ser-465). Residues 470 to 493 (PRRSSNSSITKKGSRRSSGSSPTR) show a composition bias toward low complexity. The GATA-type; atypical zinc finger occupies 499-526 (CVSCHSSDSPCWRPSWSPRKQDQLCNSC).

As to quaternary structure, component of the RPD3C(L) complex composed of at least ASH1, CTI6, DEP1, PHO23, RPD3, RXT2, RXT3, SAP30, SDS3, SIN3, UME1 and UME6.

Its subcellular location is the nucleus. In terms of biological role, component of the RPD3C(L) histone deacetylase complex (HDAC). Responsible for the deacetylation of lysine residues on the N-terminal part of the core histones (H2A, H2B, H3 and H4). Histone deacetylation gives a tag for epigenetic repression and plays an important role in transcriptional regulation, cell cycle progression and developmental events. ASH1 is necessary to repress HO in daughter cells to block mating-type switching through its binding to HO promoter 5'-YTGAT-3' sites. Also involved in pseudohyphal growth. The protein is Transcriptional regulatory protein ASH1 (ASH1) of Saccharomyces cerevisiae (strain ATCC 204508 / S288c) (Baker's yeast).